The following is a 102-amino-acid chain: Aspartyl/glutamyl-tRNA(Asn/Gln) amidotransferase subunit C (102 aa).

The protein belongs to the GatC family. Heterotrimer of A, B and C subunits.

The enzyme catalyses L-glutamyl-tRNA(Gln) + L-glutamine + ATP + H2O = L-glutaminyl-tRNA(Gln) + L-glutamate + ADP + phosphate + H(+). The catalysed reaction is L-aspartyl-tRNA(Asn) + L-glutamine + ATP + H2O = L-asparaginyl-tRNA(Asn) + L-glutamate + ADP + phosphate + 2 H(+). Allows the formation of correctly charged Asn-tRNA(Asn) or Gln-tRNA(Gln) through the transamidation of misacylated Asp-tRNA(Asn) or Glu-tRNA(Gln) in organisms which lack either or both of asparaginyl-tRNA or glutaminyl-tRNA synthetases. The reaction takes place in the presence of glutamine and ATP through an activated phospho-Asp-tRNA(Asn) or phospho-Glu-tRNA(Gln). The protein is Aspartyl/glutamyl-tRNA(Asn/Gln) amidotransferase subunit C of Bordetella pertussis (strain Tohama I / ATCC BAA-589 / NCTC 13251).